We begin with the raw amino-acid sequence, 130 residues long: uncharacterized protein (130 aa).

Residues Leu15–Ala31 traverse the membrane as a helical segment.

The protein localises to the membrane. This is an uncharacterized protein from Saccharomyces cerevisiae (strain ATCC 204508 / S288c) (Baker's yeast).